The sequence spans 87 residues: Phosphoribosyl-ATP pyrophosphatase (87 aa).

It belongs to the PRA-PH family.

Its subcellular location is the cytoplasm. It catalyses the reaction 1-(5-phospho-beta-D-ribosyl)-ATP + H2O = 1-(5-phospho-beta-D-ribosyl)-5'-AMP + diphosphate + H(+). It participates in amino-acid biosynthesis; L-histidine biosynthesis; L-histidine from 5-phospho-alpha-D-ribose 1-diphosphate: step 2/9. The protein is Phosphoribosyl-ATP pyrophosphatase of Nocardioides sp. (strain ATCC BAA-499 / JS614).